Here is a 249-residue protein sequence, read N- to C-terminus: Triosephosphate isomerase (249 aa).

Position 9-11 (9-11 (NWK)) interacts with substrate. Catalysis depends on His94, which acts as the Electrophile. Glu166 acts as the Proton acceptor in catalysis. Residues Gly172, Ser212, and 233–234 (GG) each bind substrate.

It belongs to the triosephosphate isomerase family. In terms of assembly, homodimer.

Its subcellular location is the cytoplasm. It carries out the reaction D-glyceraldehyde 3-phosphate = dihydroxyacetone phosphate. It functions in the pathway carbohydrate biosynthesis; gluconeogenesis. It participates in carbohydrate degradation; glycolysis; D-glyceraldehyde 3-phosphate from glycerone phosphate: step 1/1. In terms of biological role, involved in the gluconeogenesis. Catalyzes stereospecifically the conversion of dihydroxyacetone phosphate (DHAP) to D-glyceraldehyde-3-phosphate (G3P). The sequence is that of Triosephosphate isomerase from Treponema pallidum (strain Nichols).